Consider the following 231-residue polypeptide: Uracil phosphoribosyltransferase (231 aa).

38 to 42 (KGLVR) is a binding site for GTP. Residues arginine 87, arginine 112, and 140–148 (DPMIATGST) each bind 5-phospho-alpha-D-ribose 1-diphosphate. Uracil contacts are provided by residues isoleucine 203 and 208–210 (GDA). A 5-phospho-alpha-D-ribose 1-diphosphate-binding site is contributed by aspartate 209.

The protein belongs to the UPRTase family. It depends on Mg(2+) as a cofactor.

The catalysed reaction is UMP + diphosphate = 5-phospho-alpha-D-ribose 1-diphosphate + uracil. It participates in pyrimidine metabolism; UMP biosynthesis via salvage pathway; UMP from uracil: step 1/1. Its activity is regulated as follows. Allosterically activated by GTP. In terms of biological role, catalyzes the conversion of uracil and 5-phospho-alpha-D-ribose 1-diphosphate (PRPP) to UMP and diphosphate. This Methanococcus maripaludis (strain C5 / ATCC BAA-1333) protein is Uracil phosphoribosyltransferase.